The chain runs to 154 residues: RxLR effector protein PexRD24 (154 aa).

Residues 1–22 form the signal peptide; it reads MHSSLLWLGAVVALLAVNNVTA. The RxLR-dEER motif lies at 53–67; the sequence is RSLRAVETSEDEEER. Position 138 (Lys138) is a short sequence motif, PP1c-binding motif.

The protein belongs to the RxLR effector family. Interacts with the potato PP1c family proteins PP1c-1, PP1c-2 and PP1c-3.

The protein localises to the secreted. It localises to the host nucleus. Its subcellular location is the host nucleoplasm. The protein resides in the host nucleolus. In terms of biological role, effector that interacts with isoforms of host protein phosphatase type 1c (PP1c), mimicking a regulatory subunit and causing their re-localization within the host nucleus. The holoenzymes formed with PP1c isoforms act to promote late blight by attenuating jasmonic acid (JA)- and salicylic acid (SA)-mediated transcriptional responses of the host plant. This Phytophthora infestans (strain T30-4) (Potato late blight agent) protein is RxLR effector protein PexRD24.